The primary structure comprises 896 residues: Zinc finger protein 574 (896 aa).

3 consecutive C2H2-type zinc fingers follow at residues 16 to 38, 76 to 98, and 126 to 148; these read YVCS…QNSH, YQCL…QELH, and YECV…RQTH. Ser164 bears the Phosphoserine mark. The segment at 214–236 adopts a C2H2-type 4 zinc-finger fold; sequence YKCSECSQLFQLPADFLEHQATH. The tract at residues 239–301 is disordered; the sequence is APVPESQEPA…RARRNNSGEA (63 aa). Residues 247 to 257 show a composition bias toward polar residues; the sequence is PALQQEVQASS. The span at 274–287 shows a compositional bias: basic and acidic residues; it reads HSYELRNGEAIGRD. A Phosphoserine modification is found at Ser298. 4 consecutive C2H2-type zinc fingers follow at residues 309–331, 336–358, 364–386, and 392–413; these read LFCS…LRSH, FKCP…LGDH, FLCV…RRAH, and HSCP…RRTH. Residues 434-460 form a disordered region; the sequence is FPEPAPAETGEPEAPEPPVSEETSAGP. 6 C2H2-type zinc fingers span residues 466–489, 495–517, 523–545, 551–573, 579–601, and 607–630; these read YRCL…RFVH, HKCS…LRTH, FPCP…RLTH, YRCG…RLVH, YRCQ…RYHH, and YKCR…LVVH. A C2H2-type 15; degenerate zinc finger spans residues 636–659; it reads HRCPSCGAAFPSSLRLREHRCAAA. The C2H2-type 16 zinc-finger motif lies at 667–689; that stretch reads FECGTCGKKVGSAARLQAHEAAH. Residues 687–733 are disordered; that stretch reads AAHAAAGPGEVLAKEPPAPRAPRATRAPVASPAGLGGTATASPAAPA. A compositionally biased stretch (low complexity) spans 707-732; the sequence is APRATRAPVASPAGLGGTATASPAAP. Ser717 carries the post-translational modification Phosphoserine. Phosphothreonine is present on Thr724. Ser728 is subject to Phosphoserine. 4 consecutive C2H2-type zinc fingers follow at residues 738–760, 766–788, 794–816, and 822–844; these read LECS…RRIH, YPCP…RRLH, FACE…RRIH, and YSCP…RKTH. Asymmetric dimethylarginine is present on Arg832.

Belongs to the krueppel C2H2-type zinc-finger protein family.

Its subcellular location is the nucleus. May be involved in transcriptional regulation. The polypeptide is Zinc finger protein 574 (ZNF574) (Macaca fascicularis (Crab-eating macaque)).